Here is an 846-residue protein sequence, read N- to C-terminus: Aminopeptidase N (846 aa).

Substrate is bound by residues Glu-120 and 252-256; that span reads GAMEN. His-288 is a binding site for Zn(2+). The Proton acceptor role is filled by Glu-289. Residues His-292 and Glu-311 each coordinate Zn(2+).

This sequence belongs to the peptidase M1 family. In terms of assembly, monomer. It depends on Zn(2+) as a cofactor.

Its subcellular location is the cytoplasm. The enzyme catalyses Release of an N-terminal amino acid, Xaa-|-Yaa- from a peptide, amide or arylamide. Xaa is preferably Ala, but may be most amino acids including Pro (slow action). When a terminal hydrophobic residue is followed by a prolyl residue, the two may be released as an intact Xaa-Pro dipeptide.. Its function is as follows. Aminopeptidase with broad substrate specificity to several peptides. It has more affinity for oligopeptides than for dipeptides. It plays an essential role in the metabolism, it may be involved in nitrogen supply or protein turnover. In Lactococcus lactis subsp. cremoris (Streptococcus cremoris), this protein is Aminopeptidase N (pepN).